The following is a 404-amino-acid chain: MNKQIQTEADELGFFGEYGGQYVPETLMPAIIELKKAYKEAKADPEFQRELEYYLSEYVGRTTPLTYAASYTESLGGAKIYLKREDLNHTGAHKINNALGQALLAKRMGKKKLVAETGAGQHGVASATVAALFDMELVVFMGSEDIKRQQLNVFRMELLGAKVVAVEDGQGTLSDAVNKALQYWVSHVDDTHYLLGSALGPDPFPTIVRDFQSVIGKEIKSQILKKEGRLPDAIVACIGGGSNAIGTFYPFIKDDVALYGVEAAGQGEDTDKHALAIGKGSPGVLHGTKMYLIQDEGGQVQLAHSISAGLDYPGIGPEHSYYHDIGRVTFENASDTQAMNALINFTKHEGTIPAIESAHALSYVERLAPTMSKEDIIVVTISGRGDKDMETIRQYMAERGLAND.

Lysine 94 carries the post-translational modification N6-(pyridoxal phosphate)lysine.

It belongs to the TrpB family. As to quaternary structure, tetramer of two alpha and two beta chains. Requires pyridoxal 5'-phosphate as cofactor.

It carries out the reaction (1S,2R)-1-C-(indol-3-yl)glycerol 3-phosphate + L-serine = D-glyceraldehyde 3-phosphate + L-tryptophan + H2O. Its pathway is amino-acid biosynthesis; L-tryptophan biosynthesis; L-tryptophan from chorismate: step 5/5. Its function is as follows. The beta subunit is responsible for the synthesis of L-tryptophan from indole and L-serine. The chain is Tryptophan synthase beta chain from Staphylococcus aureus (strain bovine RF122 / ET3-1).